A 129-amino-acid polypeptide reads, in one-letter code: Small ribosomal subunit protein uS11 (129 aa).

This sequence belongs to the universal ribosomal protein uS11 family. As to quaternary structure, part of the 30S ribosomal subunit. Interacts with proteins S7 and S18. Binds to IF-3.

Functionally, located on the platform of the 30S subunit, it bridges several disparate RNA helices of the 16S rRNA. Forms part of the Shine-Dalgarno cleft in the 70S ribosome. The protein is Small ribosomal subunit protein uS11 of Paracoccus denitrificans (strain Pd 1222).